The primary structure comprises 278 residues: SPX domain-containing protein 2 (278 aa).

An SPX domain is found at 1 to 162; it reads MKFGKSLSSQ…GSMIRLPFVQ (162 aa). Disordered stretches follow at residues 191-242 and 255-278; these read PTNE…KSTV and GSST…EPGR.

In terms of assembly, interacts (via SPX domain) with PHR2 (via C-terminus). Interacts with RLI1 in the nucleus to prevents its positive regulation of leaf inclination during phosphate (Pi) starvation.

The protein localises to the nucleus. Inhibits PHR2 DNA-binding activity via a phosphate (Pi)-dependent protein interaction. Together with SPX1, plays a negative role in the regulation of leaf inclination by preventing RLI1 transcription factor activity in Pi depleted conditions. The polypeptide is SPX domain-containing protein 2 (Oryza sativa subsp. indica (Rice)).